A 38-amino-acid polypeptide reads, in one-letter code: Iota-conotoxin-like L11.5 (38 aa).

4 disulfide bridges follow: Cys-5-Cys-19, Cys-12-Cys-24, Cys-18-Cys-29, and Cys-23-Cys-36.

It belongs to the conotoxin I1 superfamily. In terms of tissue distribution, expressed by the venom duct.

It is found in the secreted. Functionally, iota-conotoxins bind to voltage-gated sodium channels (Nav) and act as agonists by shifting the voltage-dependence of activation to more hyperpolarized levels. Produces general excitatory symptoms. The polypeptide is Iota-conotoxin-like L11.5 (Conus lynceus (Lynceus cone)).